Here is a 419-residue protein sequence, read N- to C-terminus: MTRAVKPRRFAIRPIIYASVLSAGVLLCAFSAHADERDQLKSIQADIAAKERAVRQKQQQRASLLAQLKKQEEAISEATRKLRETQNTLNQLNKQIDEMNASIAKLEQQKAAQERSLAAQLDAAFRQGEHTGIQLILSGEESQRGQRLQAYFGYLNQARQETIAQLKQTREEVAMQRAELEEKQSEQQTLLYEQRAQQAKLTQALNERKKTLAGLESSIQQGQQQLSELRANESRLRNSIARAEAAAKARAEREAREAQAVRDRQKEATRKGTTYKPTESEKSLMSRTGGLGAPRGQAFWPVRGPTLHRYGEQLQGELRWKGMVIGASEGTEVKAIADGRVILADWLQGYGLVVVVEHGKGDMSLYGYNQSALVSVGSQVRAGQPIALVGSSGGQGRPSLYFEIRRQGQAVNPQPWLGR.

Positions 1–34 (MTRAVKPRRFAIRPIIYASVLSAGVLLCAFSAHA) are cleaved as a signal peptide. Coiled coils occupy residues 35–124 (DERD…LDAA) and 155–271 (LNQA…ATRK). A compositionally biased stretch (basic and acidic residues) spans 252–270 (EREAREAQAVRDRQKEATR). The interval 252 to 290 (EREAREAQAVRDRQKEATRKGTTYKPTESEKSLMSRTGG) is disordered.

Belongs to the peptidase M23B family.

The protein resides in the periplasm. Activator of the cell wall hydrolases AmiA and AmiB. Required for septal murein cleavage and daughter cell separation during cell division. In vitro, exhibits weak endoproteolytic activity on beta-casein. This is Murein hydrolase activator EnvC (envC) from Escherichia coli (strain K12).